The primary structure comprises 447 residues: Glutamate-1-semialdehyde 2,1-aminomutase (447 aa).

N6-(pyridoxal phosphate)lysine is present on Lys272.

The protein belongs to the class-III pyridoxal-phosphate-dependent aminotransferase family. HemL subfamily. Homodimer. Requires pyridoxal 5'-phosphate as cofactor.

Its subcellular location is the cytoplasm. The catalysed reaction is (S)-4-amino-5-oxopentanoate = 5-aminolevulinate. It functions in the pathway porphyrin-containing compound metabolism; protoporphyrin-IX biosynthesis; 5-aminolevulinate from L-glutamyl-tRNA(Glu): step 2/2. The protein is Glutamate-1-semialdehyde 2,1-aminomutase of Leifsonia xyli subsp. xyli (strain CTCB07).